Consider the following 461-residue polypeptide: Glycine--tRNA ligase (461 aa).

Residues Arg99 and Glu173 each contribute to the substrate site. ATP is bound by residues 205 to 207, 215 to 220, 289 to 290, and 333 to 336; these read RNE, FRTREF, EL, and GADR. A substrate-binding site is contributed by 220 to 224; that stretch reads FEQME. 329–333 serves as a coordination point for substrate; sequence EPSLG.

It belongs to the class-II aminoacyl-tRNA synthetase family. In terms of assembly, homodimer.

Its subcellular location is the cytoplasm. It carries out the reaction tRNA(Gly) + glycine + ATP = glycyl-tRNA(Gly) + AMP + diphosphate. Functionally, catalyzes the attachment of glycine to tRNA(Gly). The sequence is that of Glycine--tRNA ligase from Lysinibacillus sphaericus (strain C3-41).